The chain runs to 452 residues: Peptidoglycan DL-endopeptidase CwlO (452 aa).

An N-terminal signal peptide occupies residues 1-30 (MKKKVYTFGLASILGTASLFTPFMNNTASA). Over residues 28-38 (ASAETSQQKQE) the composition is skewed to polar residues. 2 disordered regions span residues 28–53 (ASAE…IESK) and 258–317 (AAAA…GSVV). Basic and acidic residues-rich tracts occupy residues 39-53 (IQQK…IESK) and 263-275 (KAKE…EKSD). A compositionally biased stretch (low complexity) spans 276-317 (SGSSSSSNSGSVSKSDGSSNSGSSSSKKSSSPSRNYSSGSVV). One can recognise a NlpC/P60 domain in the interval 321-450 (GNAIEAAIST…KAFNGVVRRV (130 aa)). The active-site Nucleophile is the Cys358. His410 serves as the catalytic Proton acceptor. Asn422 is a catalytic residue.

Belongs to the peptidase C40 family.

Its subcellular location is the secreted. In terms of biological role, shows a cell wall hydrolytic DL-endopeptidase activity. The chain is Peptidoglycan DL-endopeptidase CwlO (cwlO) from Bacillus licheniformis (strain ATCC 14580 / DSM 13 / JCM 2505 / CCUG 7422 / NBRC 12200 / NCIMB 9375 / NCTC 10341 / NRRL NRS-1264 / Gibson 46).